The sequence spans 444 residues: Tol-Pal system protein TolB (444 aa).

The N-terminal stretch at 1 to 19 (MRNIIYFILSLLFSFASYA) is a signal peptide.

It belongs to the TolB family. The Tol-Pal system is composed of five core proteins: the inner membrane proteins TolA, TolQ and TolR, the periplasmic protein TolB and the outer membrane protein Pal. They form a network linking the inner and outer membranes and the peptidoglycan layer.

It localises to the periplasm. Part of the Tol-Pal system, which plays a role in outer membrane invagination during cell division and is important for maintaining outer membrane integrity. The sequence is that of Tol-Pal system protein TolB from Rickettsia massiliae (strain Mtu5).